A 222-amino-acid polypeptide reads, in one-letter code: 7-cyano-7-deazaguanine synthase (222 aa).

9–19 (LSGGLDSATAA) contacts ATP. 4 residues coordinate Zn(2+): C190, C198, C201, and C204.

The protein belongs to the QueC family. Requires Zn(2+) as cofactor.

It carries out the reaction 7-carboxy-7-deazaguanine + NH4(+) + ATP = 7-cyano-7-deazaguanine + ADP + phosphate + H2O + H(+). It functions in the pathway purine metabolism; 7-cyano-7-deazaguanine biosynthesis. Functionally, catalyzes the ATP-dependent conversion of 7-carboxy-7-deazaguanine (CDG) to 7-cyano-7-deazaguanine (preQ(0)). This chain is 7-cyano-7-deazaguanine synthase, found in Synechococcus sp. (strain RCC307).